We begin with the raw amino-acid sequence, 464 residues long: tRNA-2-methylthio-N(6)-dimethylallyladenosine synthase (464 aa).

One can recognise an MTTase N-terminal domain in the interval 19–135 (GSYWITTFGC…LENLLERVDL (117 aa)). 6 residues coordinate [4Fe-4S] cluster: C28, C64, C98, C170, C174, and C177. The Radical SAM core domain occupies 156–393 (RDSSICGWVN…NELVETTSRK (238 aa)). The region spanning 396 to 464 (QRYLNNIESV…SFSLSGQIYK (69 aa)) is the TRAM domain.

It belongs to the methylthiotransferase family. MiaB subfamily. As to quaternary structure, monomer. Requires [4Fe-4S] cluster as cofactor.

It localises to the cytoplasm. The catalysed reaction is N(6)-dimethylallyladenosine(37) in tRNA + (sulfur carrier)-SH + AH2 + 2 S-adenosyl-L-methionine = 2-methylsulfanyl-N(6)-dimethylallyladenosine(37) in tRNA + (sulfur carrier)-H + 5'-deoxyadenosine + L-methionine + A + S-adenosyl-L-homocysteine + 2 H(+). Catalyzes the methylthiolation of N6-(dimethylallyl)adenosine (i(6)A), leading to the formation of 2-methylthio-N6-(dimethylallyl)adenosine (ms(2)i(6)A) at position 37 in tRNAs that read codons beginning with uridine. The sequence is that of tRNA-2-methylthio-N(6)-dimethylallyladenosine synthase from Prochlorococcus marinus subsp. pastoris (strain CCMP1986 / NIES-2087 / MED4).